Reading from the N-terminus, the 748-residue chain is MTRRTTINPDSVVLNPQKFIQKERADSKIKVDQVNTFLESSPERRTLTHALIDQIVNDPILKTDTDYYDAKKMQEREITAKKIARLASYMEHDIKTVRKHFRDTDLMKELQANDPDKASPLTNKDLFIFDKRLSLVANIDPQLGTRVGVHLGLFGNCIKGNGTDEQIRYWLQERGATLMKGIYGCFAMTELGHGSNVAQLQTRAVYDKQNDTFVIDTPDLTATKWWIGGAAHSATHAAVYARLIVEGKDYGVKTFVVPLRDPSTFQLLAGVSIGDIGAKMGRDGIDNGWIQFRNVVIPREFMLSRFTKVVRSPDGSVTVKTEPQLDQISGYSALLSGRVNMVMDSFRFGSKFATIAVRYAVGRQQFAPRKGLSETQLIDYPLHQYRVLPQLCVPYLVSPVAFKLMDNYYSTLDELYNASSSAYKAALVTVSKKLKNLFIDSASLKATNTWLIATLIDELRQTCGGHGYSQYNGFGKGYDDWVVQCTWEGDNNVLSLTSAKSILKKFIDSATKGRFDNTLDVDSFSYLKPQYIGSVVSGEIKSGLKELGDYTEIWSITLIKLLAHIGTLVEKSRSIDSVSKLLVLVSKFHALRCMLKTYYDKLNSRDSHISDEITKESMWNVYKLFSLYFIDKHSGEFQQFKIFTPDQISKVVQPQLLALLPIVRKDCIGLTDSFELPDAMLNSPIGYFDGDIYHNYFNEVCRNNPVEADGAGKPSYHALLSSMLGRGFEFDQKLGGAANAEILSKINK.

The protein belongs to the acyl-CoA oxidase family. As to quaternary structure, homooctamer. FAD is required as a cofactor.

It localises to the peroxisome. The enzyme catalyses a 2,3-saturated acyl-CoA + O2 = a (2E)-enoyl-CoA + H2O2. It participates in lipid metabolism; peroxisomal fatty acid beta-oxidation. This Saccharomyces cerevisiae (strain ATCC 204508 / S288c) (Baker's yeast) protein is Acyl-coenzyme A oxidase (POX1).